We begin with the raw amino-acid sequence, 156 residues long: Ribosomal RNA large subunit methyltransferase H (156 aa).

S-adenosyl-L-methionine contacts are provided by residues leucine 72, glycine 104, and 123–128; that span reads LSEMTL.

Belongs to the RNA methyltransferase RlmH family. As to quaternary structure, homodimer.

The protein localises to the cytoplasm. The enzyme catalyses pseudouridine(1915) in 23S rRNA + S-adenosyl-L-methionine = N(3)-methylpseudouridine(1915) in 23S rRNA + S-adenosyl-L-homocysteine + H(+). In terms of biological role, specifically methylates the pseudouridine at position 1915 (m3Psi1915) in 23S rRNA. The sequence is that of Ribosomal RNA large subunit methyltransferase H from Syntrophotalea carbinolica (strain DSM 2380 / NBRC 103641 / GraBd1) (Pelobacter carbinolicus).